Consider the following 401-residue polypeptide: 3-hydroxyisobutyryl-CoA hydrolase-like protein 1, mitochondrial (401 aa).

The transit peptide at 1 to 26 directs the protein to the mitochondrion; that stretch reads MHNAKGLLGRIVRDKLWRFGYRRSLC.

It belongs to the enoyl-CoA hydratase/isomerase family.

Its subcellular location is the mitochondrion. The protein is 3-hydroxyisobutyryl-CoA hydrolase-like protein 1, mitochondrial of Arabidopsis thaliana (Mouse-ear cress).